A 435-amino-acid polypeptide reads, in one-letter code: Elongation factor 1-alpha (435 aa).

The 226-residue stretch at 4–229 (KPHLNLIVIG…DQLEIPPKPV (226 aa)) folds into the tr-type G domain. The segment at 13–20 (GHVDHGKS) is G1. 13-20 (GHVDHGKS) contacts GTP. Residue serine 20 coordinates Mg(2+). The segment at 69–73 (GVTIN) is G2. The G3 stretch occupies residues 90–93 (DAPG). GTP-binding positions include 90–94 (DAPGH) and 152–155 (NKMD). Residues 152 to 155 (NKMD) form a G4 region. A G5 region spans residues 193–195 (VAP).

The protein belongs to the TRAFAC class translation factor GTPase superfamily. Classic translation factor GTPase family. EF-Tu/EF-1A subfamily.

It localises to the cytoplasm. The catalysed reaction is GTP + H2O = GDP + phosphate + H(+). Its function is as follows. GTP hydrolase that promotes the GTP-dependent binding of aminoacyl-tRNA to the A-site of ribosomes during protein biosynthesis. This Sulfurisphaera tokodaii (strain DSM 16993 / JCM 10545 / NBRC 100140 / 7) (Sulfolobus tokodaii) protein is Elongation factor 1-alpha.